The primary structure comprises 84 residues: Putative defensin-like protein 63 (84 aa).

A signal peptide spans 1–21 (MDIRKTYVIIFFVGILTISFS). 4 disulfide bridges follow: cysteine 40–cysteine 81, cysteine 44–cysteine 67, cysteine 53–cysteine 79, and cysteine 57–cysteine 80.

This sequence belongs to the DEFL family.

The protein localises to the secreted. The chain is Putative defensin-like protein 63 from Arabidopsis thaliana (Mouse-ear cress).